Consider the following 421-residue polypeptide: U-box domain-containing protein 25 (421 aa).

One can recognise a U-box domain in the interval 13–88 (QIPYHFRCPI…QEWCVANRSN (76 aa)).

The enzyme catalyses S-ubiquitinyl-[E2 ubiquitin-conjugating enzyme]-L-cysteine + [acceptor protein]-L-lysine = [E2 ubiquitin-conjugating enzyme]-L-cysteine + N(6)-ubiquitinyl-[acceptor protein]-L-lysine.. Its pathway is protein modification; protein ubiquitination. Its function is as follows. Functions as an E3 ubiquitin ligase. This Arabidopsis thaliana (Mouse-ear cress) protein is U-box domain-containing protein 25 (PUB25).